A 1221-amino-acid polypeptide reads, in one-letter code: Deubiquitinating protein VCPIP1 (1221 aa).

Positions Met-1–Ala-19 are enriched in pro residues. Residues Met-1–Asp-40 form a disordered region. Positions Leu-207–Ile-360 constitute an OTU domain. Asp-215 is a catalytic residue. The active-site Nucleophile is Cys-218. His-353 is a catalytic residue. At Lys-407 the chain carries N6-acetyllysine. Disordered stretches follow at residues Ser-724–Ile-778 and Glu-988–Gly-1009. Phosphoserine occurs at positions 746 and 756. Low complexity predominate over residues Pro-754–Thr-770. The residue at position 762 (Thr-762) is a Phosphothreonine. Phosphoserine occurs at positions 767, 993, 997, and 1076. 2 disordered regions span residues Ala-1117–Arg-1177 and Arg-1189–Ser-1221. Positions Val-1143 to Leu-1156 are enriched in polar residues. The segment covering Leu-1162 to Thr-1173 has biased composition (low complexity). Ser-1197 and Ser-1206 each carry phosphoserine. The segment covering Met-1198–Asp-1208 has biased composition (acidic residues). Polar residues predominate over residues Ala-1209–Ser-1221.

In terms of assembly, binds VCP and the ternary complex containing STX5A, NSFL1C and VCP. Phosphorylated at Ser-1206 by ATM or ATR following induction of covalent DNA-protein cross-links (DPCs). Widely expressed.

It is found in the nucleus. It localises to the cytoplasm. Its subcellular location is the endoplasmic reticulum. The protein resides in the golgi apparatus. The protein localises to the golgi stack. It catalyses the reaction Thiol-dependent hydrolysis of ester, thioester, amide, peptide and isopeptide bonds formed by the C-terminal Gly of ubiquitin (a 76-residue protein attached to proteins as an intracellular targeting signal).. Functionally, deubiquitinating enzyme involved in DNA repair and reassembly of the Golgi apparatus and the endoplasmic reticulum following mitosis. Necessary for VCP-mediated reassembly of Golgi stacks after mitosis. Plays a role in VCP-mediated formation of transitional endoplasmic reticulum (tER). Mediates dissociation of the ternary complex containing STX5A, NSFL1C and VCP. Also involved in DNA repair following phosphorylation by ATM or ATR: acts by catalyzing deubiquitination of SPRTN, thereby promoting SPRTN recruitment to chromatin and subsequent proteolytic cleavage of covalent DNA-protein cross-links (DPCs). Hydrolyzes 'Lys-11'- and 'Lys-48'-linked polyubiquitin chains. This Rattus norvegicus (Rat) protein is Deubiquitinating protein VCPIP1.